A 186-amino-acid polypeptide reads, in one-letter code: Ran guanine nucleotide release factor (186 aa).

The interval 27–70 (DLRPVPDNQEVFCHPVTDQSLIVELLELQAHVRGEAAARYHFED) is interaction with RAN.

It belongs to the MOG1 family. In terms of assembly, monomer. Interacts with RAN, both RAN-GTP and RAN-GDP. Competes with RCC1 for a common binding site on RAN and thereby inhibits RCC1-mediated nucleotide exchange. Forms a complex with RAN-GTP and RANBP1. Interacts with the cytoplasmic loop 2 of SCN5A. In terms of tissue distribution, isoform 1 and isoform 2 are ubiquitously expressed. Detected in heart and brain.

It localises to the nucleus. It is found in the cytoplasm. The protein resides in the perinuclear region. Its subcellular location is the cell membrane. May regulate the intracellular trafficking of RAN. Promotes guanine nucleotide release from RAN and inhibits binding of new GTP by preventing the binding of the RAN guanine nucleotide exchange factor RCC1. Regulates the levels of GTP-bound RAN in the nucleus, and thereby plays a role in the regulation of RAN-dependent mitotic spindle dynamics. Enhances the expression of SCN5A at the cell membrane in cardiomyocytes. This chain is Ran guanine nucleotide release factor (RANGRF), found in Homo sapiens (Human).